The primary structure comprises 495 residues: Beta-galactoside alpha-2,6-sialyltransferase 2 (495 aa).

The Cytoplasmic portion of the chain corresponds to 1-10 (MKPHLKQWRQ). Residues 11–31 (GMLCGVFAWGLFFVVIFLYFT) form a helical; Signal-anchor for type II membrane protein membrane-spanning segment. Residues 32-495 (DSSPAKPAPS…LQAVRCPPGA (464 aa)) lie on the Lumenal side of the membrane. Disordered stretches follow at residues 63–90 (GASE…LRTW) and 107–165 (GRTS…EDGE). The span at 134-143 (PEGARPPRAA) shows a compositional bias: low complexity. Over residues 144–153 (PGRRAKRGPR) the composition is skewed to basic residues. 3 cysteine pairs are disulfide-bonded: Cys-225/Cys-491, Cys-268/Cys-420, and Cys-438/Cys-449. Asn-279 and Asn-309 each carry an N-linked (GlcNAc...) asparagine glycan.

This sequence belongs to the glycosyltransferase 29 family.

It is found in the golgi apparatus. Its subcellular location is the golgi stack membrane. It carries out the reaction a beta-D-galactoside + CMP-N-acetyl-beta-neuraminate = an N-acetyl-alpha-neuraminyl-(2-&gt;6)-beta-D-galactosyl derivative + CMP + H(+). Its function is as follows. Transfers sialic acid from the donor of substrate CMP-sialic acid to galactose containing acceptor substrates. Has alpha-2,6-sialyltransferase activity toward oligosaccharides that have the Gal-beta-1,4-GlcNAc sequence at the non-reducing end of their carbohydrate groups, but it has weak or no activities toward glycoproteins and glycolipids. The polypeptide is Beta-galactoside alpha-2,6-sialyltransferase 2 (ST6GAL2) (Bos taurus (Bovine)).